The sequence spans 470 residues: Desmin (470 aa).

The tract at residues 2 to 108 (SQAYSSSQRV…QEFLTTRTNE (107 aa)) is head. S7 bears the Phosphoserine; by CDK1 mark. At S12 the chain carries Phosphoserine; by AURKB. R16 is subject to Omega-N-methylarginine. T17 bears the Phosphothreonine; by AURKB and ROCK1 mark. Position 28 is a phosphoserine; by CDK1 (S28). A Phosphoserine modification is found at S31. At S32 the chain carries Phosphoserine; by CDK1. At R37 the chain carries Asymmetric dimethylarginine; alternate. Residue R37 is modified to Omega-N-methylarginine; alternate. At S45 the chain carries Phosphoserine. The residue at position 58 (R58) is an ADP-ribosylarginine. S60 is subject to Phosphoserine; by AURKB. R70 bears the Omega-N-methylarginine mark. The residue at position 77 (T77) is a Phosphothreonine; by ROCK1. A Phosphoserine modification is found at S81. An IF rod domain is found at 108-416 (EKVELQELND…KLLEGEESRI (309 aa)). Residues 109–141 (KVELQELNDRFANYIEKVRFLEQQNAALAAEVN) form a coil 1A region. Residues 142 to 151 (RLKGREPTRV) form a linker 1 region. Residues 152 to 252 (AEIYEEELRE…HEEEIRELQA (101 aa)) are coil 1B. The segment at 253 to 268 (QLQEQQVQVEMDMSKP) is linker 12. Positions 268-415 (PDLTAALRDI…RKLLEGEESR (148 aa)) are interaction with NEB. Positions 269–287 (DLTAALRDIRAQYETIAAK) are coil 2A. Positions 288-295 (NISEAEEW) are linker 2. A phosphoserine mark is found at S290, S358, S361, and S424. The coil 2B stretch occupies residues 296–412 (YKSKVSDLTQ…ATYRKLLEGE (117 aa)). The tract at residues 413–470 (ESRINLPIQTFSALNFRETSPEQRGSEVHTKKTVMIKTIETRDGEVVSEATQQQHEVL) is tail. The interaction with CRYAB stretch occupies residues 438-453 (SEVHTKKTVMIKTIET).

It belongs to the intermediate filament family. As to quaternary structure, homomer. Interacts with DST. Interacts with MTM1. Interacts with EPPK1; interaction is dependent of higher-order structure of intermediate filament. Interacts with CRYAB. Interacts with NEB (via nebulin repeats 160-164). Interacts (via rod region) with NEBL (via nebulin repeats 1-5). Interacts with ASB2; the interaction targets DES for proteasomal degradation. Interacts with PKP1. Interacts with FLII. In terms of processing, ADP-ribosylation prevents ability to form intermediate filaments. Phosphorylation at Ser-7, Ser-28 and Ser-32 by CDK1 and phosphorylation at Ser-60 by AURKB contribute to efficient separation of desmin intermediate filaments during mitosis. Post-translationally, ubiquitination by a SCF-like complex containing ASB2 leads to proteasomal degradation.

Its subcellular location is the cytoplasm. It is found in the myofibril. The protein localises to the sarcomere. It localises to the z line. The protein resides in the cell membrane. Its subcellular location is the sarcolemma. It is found in the nucleus. The protein localises to the cell tip. It localises to the nucleus envelope. Functionally, muscle-specific type III intermediate filament essential for proper muscular structure and function. Plays a crucial role in maintaining the structure of sarcomeres, inter-connecting the Z-disks and forming the myofibrils, linking them not only to the sarcolemmal cytoskeleton, but also to the nucleus and mitochondria, thus providing strength for the muscle fiber during activity. In adult striated muscle they form a fibrous network connecting myofibrils to each other and to the plasma membrane from the periphery of the Z-line structures. May act as a sarcomeric microtubule-anchoring protein: specifically associates with detyrosinated tubulin-alpha chains, leading to buckled microtubules and mechanical resistance to contraction. Required for nuclear membrane integrity, via anchoring at the cell tip and nuclear envelope, resulting in maintenance of microtubule-derived intracellular mechanical forces. Contributes to the transcriptional regulation of the NKX2-5 gene in cardiac progenitor cells during a short period of cardiomyogenesis and in cardiac side population stem cells in the adult. Plays a role in maintaining an optimal conformation of nebulette (NEB) on heart muscle sarcomeres to bind and recruit cardiac alpha-actin. This is Desmin (DES) from Bos taurus (Bovine).